The following is a 227-amino-acid chain: Ribosomal RNA large subunit methyltransferase E (227 aa).

S-adenosyl-L-methionine is bound by residues Gly78, Trp80, Asp103, Asp119, and Asp143. The Proton acceptor role is filled by Lys183.

The protein belongs to the class I-like SAM-binding methyltransferase superfamily. RNA methyltransferase RlmE family.

The protein localises to the cytoplasm. The catalysed reaction is uridine(2552) in 23S rRNA + S-adenosyl-L-methionine = 2'-O-methyluridine(2552) in 23S rRNA + S-adenosyl-L-homocysteine + H(+). Functionally, specifically methylates the uridine in position 2552 of 23S rRNA at the 2'-O position of the ribose in the fully assembled 50S ribosomal subunit. The protein is Ribosomal RNA large subunit methyltransferase E of Rickettsia rickettsii (strain Iowa).